Here is a 135-residue protein sequence, read N- to C-terminus: UPF0355 protein MRSA252 (135 aa).

This sequence belongs to the UPF0355 family.

The sequence is that of UPF0355 protein MRSA252 from Staphylococcus aureus (strain MRSA252).